Consider the following 110-residue polypeptide: Insulin (110 aa).

A signal peptide spans 1 to 24 (MALWMHLLTVLALLALWGPNTGQA). 3 disulfide bridges follow: Cys-31–Cys-96, Cys-43–Cys-109, and Cys-95–Cys-100. A propeptide spans 57-87 (ELEDPQVEQTELGMGLGAGGLQPLALEMALQ) (c peptide).

This sequence belongs to the insulin family. Heterodimer of a B chain and an A chain linked by two disulfide bonds.

The protein localises to the secreted. In terms of biological role, insulin decreases blood glucose concentration. It increases cell permeability to monosaccharides, amino acids and fatty acids. It accelerates glycolysis, the pentose phosphate cycle, and glycogen synthesis in liver. This is Insulin (INS) from Cavia porcellus (Guinea pig).